Here is a 473-residue protein sequence, read N- to C-terminus: Mitochondrial adenyl nucleotide antiporter SLC25A24-B (473 aa).

The segment at 1 to 173 is regulatory N-terminal domain; it reads MLEQVQKFLL…RYWKHSTVLD (173 aa). Topologically, residues 1-197 are mitochondrial intermembrane; it reads MLEQVQKFLL…EKKTGQWWKQ (197 aa). 4 consecutive EF-hand domains span residues 19–54, 55–88, 86–121, and 122–157; these read DSQS…MGME, VGKG…EEHE, EHEK…LGIK, and ISLD…NPAD. Ca(2+) is bound by residues D32, N34, D36, K38, E43, D68, N70, D72, H74, E79, D99, N101, D103, K105, E110, D135, D137, T139, T141, and E146. The tract at residues 159–168 is linker region; the sequence is IQQIIRYWKH. Residues 174–473 are C-terminal transmembrane transporter domain; the sequence is IGDSLTIPDE…YEKMKVQLGI (300 aa). Solcar repeat units lie at residues 192-277, 285-370, and 382-470; these read GQWW…YKKL, LGTA…LKNY, and PGVL…MKVQ. Residues 198–215 form a helical membrane-spanning segment; sequence LMAGGMAGAVSRTGTAPL. Over 216-251 the chain is Mitochondrial matrix; it reads DRLKVMMQVHGSKGNSNIITGLKQMVKEGGIRSLWR. A helical membrane pass occupies residues 252 to 271; sequence GNGVNVIKIAPETAMKFWAY. At 272–294 the chain is on the mitochondrial intermembrane side; the sequence is EQYKKLFTSESGKLGTAERFVAG. A helical membrane pass occupies residues 295–308; it reads SLAGATAQTSIYPM. At 309-344 the chain is on the mitochondrial matrix side; that stretch reads EVLKTRLAVGRTGQYSGMFDCAKKIMQKEGIRAFYK. A helical membrane pass occupies residues 345 to 364; that stretch reads GYIPNILGIIPYAGIDLAIY. At 365 to 387 the chain is on the mitochondrial intermembrane side; the sequence is ETLKNYWLQNHAKDSANPGVLVL. The helical transmembrane segment at 388–405 threads the bilayer; the sequence is LGCGTASSTCGQLASYPL. The Mitochondrial matrix portion of the chain corresponds to 406 to 444; it reads ALIRTRMQAQASIEGAPQLNMGGLFRKIVAKEGFLGLYR. Residues 445–464 form a helical membrane-spanning segment; it reads GIGPNFLKVLPAVSISYVVY. Residues 465-473 lie on the Mitochondrial intermembrane side of the membrane; it reads EKMKVQLGI.

The protein belongs to the mitochondrial carrier (TC 2.A.29) family. Monomer.

It localises to the mitochondrion inner membrane. The catalysed reaction is Mg(2+)(out) + phosphate(in) + ATP(out) = Mg(2+)(in) + phosphate(out) + ATP(in). The enzyme catalyses ADP(out) + phosphate(in) + H(+)(out) = ADP(in) + phosphate(out) + H(+)(in). It catalyses the reaction AMP(out) + phosphate(in) = AMP(in) + phosphate(out). It carries out the reaction phosphate(in) + ATP(out) + 2 H(+)(out) = phosphate(out) + ATP(in) + 2 H(+)(in). The catalysed reaction is dADP(in) + ADP(out) = dADP(out) + ADP(in). The enzyme catalyses Mg(2+)(in) + ADP(out) + ATP(in) + H(+)(out) = Mg(2+)(out) + ADP(in) + ATP(out) + H(+)(in). It catalyses the reaction ADP(out) + diphosphate(in) = ADP(in) + diphosphate(out). It carries out the reaction dAMP(in) + ADP(out) + H(+)(out) = dAMP(out) + ADP(in) + H(+)(in). The catalysed reaction is 3'-AMP(in) + ADP(out) + H(+)(out) = 3'-AMP(out) + ADP(in) + H(+)(in). The enzyme catalyses dAMP(out) + phosphate(in) = dAMP(in) + phosphate(out). It catalyses the reaction 3'-AMP(out) + phosphate(in) = 3'-AMP(in) + phosphate(out). It carries out the reaction dADP(out) + phosphate(in) + H(+)(out) = dADP(in) + phosphate(out) + H(+)(in). With respect to regulation, activated by an increase in cytosolic calcium levels that induce a conformational change of the N-terminal regulatory domain, uncapping the channel and allowing transport. Inhibited by bathophenanthroline, mersalyl, p-hydroxymercuribenzoate, bromcresol purple and tannic acid. Functionally, electroneutral antiporter that mediates the transport of adenyl nucleotides through the inner mitochondrial membrane. Originally identified as an ATP-magnesium/inorganic phosphate antiporter, it also acts as a broad specificity adenyl nucleotide antiporter. By regulating the mitochondrial matrix adenyl nucleotide pool could adapt to changing cellular energetic demands and indirectly regulate adenyl nucleotide-dependent metabolic pathways. This is Mitochondrial adenyl nucleotide antiporter SLC25A24-B (slc25a24-b) from Xenopus laevis (African clawed frog).